Consider the following 122-residue polypeptide: Large ribosomal subunit protein bL12 (122 aa).

The protein belongs to the bacterial ribosomal protein bL12 family. In terms of assembly, homodimer. Part of the ribosomal stalk of the 50S ribosomal subunit. Forms a multimeric L10(L12)X complex, where L10 forms an elongated spine to which 2 to 4 L12 dimers bind in a sequential fashion. Binds GTP-bound translation factors.

Forms part of the ribosomal stalk which helps the ribosome interact with GTP-bound translation factors. Is thus essential for accurate translation. This chain is Large ribosomal subunit protein bL12, found in Fusobacterium nucleatum subsp. nucleatum (strain ATCC 25586 / DSM 15643 / BCRC 10681 / CIP 101130 / JCM 8532 / KCTC 2640 / LMG 13131 / VPI 4355).